The chain runs to 163 residues: MFVDDVTRAFESGDFARPNLFQVEISYLGQNFTFQCKATALPAGIVEKIPVGFMNRKINDAGDRTFDDWTVTVMNDEAHDARQKFVDWQSIAAGQGNEITGGKPAEYKKSAVVRQYARDAKTVTKEVEIKGLWPTNVGELQLDWDSNNEIQTFEVTLALDYWE.

It belongs to the T4-like viruses Gp19 protein family.

Its subcellular location is the virion. Structural component of the bacteriophage tail which consists of a contractile sheath, a tube and a baseplate. The central cylindrical segment of the tail consists of a rigid tube, composed of multiple copies of the tail tube protein. During infection, contraction of the sheath drives the central tube through the host outer membrane, creating a channel for DNA ejection from the capsid into the host cell. The chain is Tail tube protein gp19 (19) from Escherichia coli (Bacteriophage T6).